A 214-amino-acid polypeptide reads, in one-letter code: MSETAPVPQPASVAPEKPAATKKTRKPAKAAVPRKKPAGPSVSELIVQAVSSSKERSGVSLAALKKSLAAAGYDVEKNNSRIKLGLKSLVNKGTLVQTKGTGAAGSFKLNKKAESKASTTKVTVKAKASGAAKKPKKTAGAAAKKTVKTPKKPKKPAVSKKTSSKSPKKPKVVKAKKVAKSPAKAKAVKPKAAKVKVTKPKTPAKPKKAAPKKK.

The disordered stretch occupies residues methionine 1–serine 43. Residue serine 2 is modified to N-acetylserine. Residues serine 2 and serine 12 each carry the phosphoserine modification. N6-acetyllysine is present on lysine 17. Residues alanine 20 to proline 37 are compositionally biased toward basic residues. At lysine 36 the chain carries N6-(beta-hydroxybutyryl)lysine. One can recognise an H15 domain in the interval alanine 38 to lysine 111. A Phosphoserine modification is found at serine 43. Lysine 54 is subject to N6-(beta-hydroxybutyryl)lysine. Residue arginine 56 is modified to Citrulline. The residue at position 66 (lysine 66) is an N6-(beta-hydroxybutyryl)lysine. Serine 67 is subject to Phosphoserine. Lysine 77 is modified (N6-acetyllysine). N6-(beta-hydroxybutyryl)lysine is present on lysine 87. The residue at position 92 (lysine 92) is an N6-(beta-hydroxybutyryl)lysine; alternate. Lysine 92 bears the N6-acetyllysine; alternate mark. The tract at residues glycine 93–lysine 214 is disordered. Position 106 is a phosphoserine (serine 106). Lysine 108 is modified (N6-(beta-hydroxybutyryl)lysine). Low complexity predominate over residues lysine 116–lysine 144. At lysine 121 the chain carries N6-acetyllysine. Basic residues-rich tracts occupy residues lysine 145 to alanine 179 and lysine 186 to lysine 214. The residue at position 202 (threonine 202) is a Phosphothreonine.

This sequence belongs to the histone H1/H5 family. As to quaternary structure, interacts with DFFB. Post-translationally, H1 histones are progressively phosphorylated during the cell cycle, becoming maximally phosphorylated during late G2 phase and M phase, and being dephosphorylated sharply thereafter. In terms of processing, citrullination at Arg-56 (H1R54ci) by PADI4 takes place within the DNA-binding site of H1 and results in its displacement from chromatin and global chromatin decondensation, thereby promoting pluripotency and stem cell maintenance.

The protein localises to the nucleus. Its subcellular location is the chromosome. H1 histones bind to linker DNA between nucleosomes forming the macromolecular structure known as the chromatin fiber. H1 histones are necessary for the condensation of nucleosome chains into higher-order structured fibers. Also acts as a regulator of individual gene transcription through chromatin remodeling. This chain is Histone H1.1, found in Rattus norvegicus (Rat).